We begin with the raw amino-acid sequence, 260 residues long: Pyridoxine 5'-phosphate synthase (260 aa).

Asparagine 6 is a binding site for 3-amino-2-oxopropyl phosphate. 8 to 9 (DH) is a binding site for 1-deoxy-D-xylulose 5-phosphate. Arginine 17 contributes to the 3-amino-2-oxopropyl phosphate binding site. Histidine 42 serves as the catalytic Proton acceptor. 1-deoxy-D-xylulose 5-phosphate contacts are provided by arginine 44 and histidine 49. Glutamate 69 functions as the Proton acceptor in the catalytic mechanism. Threonine 99 serves as a coordination point for 1-deoxy-D-xylulose 5-phosphate. Histidine 213 functions as the Proton donor in the catalytic mechanism. 3-amino-2-oxopropyl phosphate is bound by residues glycine 214 and 235–236 (GQ).

Belongs to the PNP synthase family. In terms of assembly, homooctamer; tetramer of dimers.

The protein localises to the cytoplasm. The enzyme catalyses 3-amino-2-oxopropyl phosphate + 1-deoxy-D-xylulose 5-phosphate = pyridoxine 5'-phosphate + phosphate + 2 H2O + H(+). It functions in the pathway cofactor biosynthesis; pyridoxine 5'-phosphate biosynthesis; pyridoxine 5'-phosphate from D-erythrose 4-phosphate: step 5/5. In terms of biological role, catalyzes the complicated ring closure reaction between the two acyclic compounds 1-deoxy-D-xylulose-5-phosphate (DXP) and 3-amino-2-oxopropyl phosphate (1-amino-acetone-3-phosphate or AAP) to form pyridoxine 5'-phosphate (PNP) and inorganic phosphate. This is Pyridoxine 5'-phosphate synthase from Sulfurimonas denitrificans (strain ATCC 33889 / DSM 1251) (Thiomicrospira denitrificans (strain ATCC 33889 / DSM 1251)).